Reading from the N-terminus, the 198-residue chain is Recombination protein RecR (198 aa).

The segment at 57–72 adopts a C4-type zinc-finger fold; the sequence is CSICGHITDQDPCYIC. A Toprim domain is found at 80-175; the sequence is SVICVVQDPK…KLSRIAHGLP (96 aa).

This sequence belongs to the RecR family.

Functionally, may play a role in DNA repair. It seems to be involved in an RecBC-independent recombinational process of DNA repair. It may act with RecF and RecO. The protein is Recombination protein RecR of Bacillus velezensis (strain DSM 23117 / BGSC 10A6 / LMG 26770 / FZB42) (Bacillus amyloliquefaciens subsp. plantarum).